The following is a 347-amino-acid chain: NADH-ubiquinone oxidoreductase chain 2 (347 aa).

The next 10 helical transmembrane spans lie at 1–21 (MNPL…GIVM), 25–45 (HWLT…PILM), 59–79 (YFLT…INLV), 96–116 (IILT…FWVP), 122–142 (VHLP…MSVL), 148–168 (MINL…GGWG), 200–220 (MALL…LTFM), 240–260 (ITTI…LSGF), 274–294 (NSII…FFYM), and 325–345 (LLSP…MLML).

The protein belongs to the complex I subunit 2 family. Core subunit of respiratory chain NADH dehydrogenase (Complex I) which is composed of 45 different subunits. Interacts with TMEM242.

It is found in the mitochondrion inner membrane. It catalyses the reaction a ubiquinone + NADH + 5 H(+)(in) = a ubiquinol + NAD(+) + 4 H(+)(out). Functionally, core subunit of the mitochondrial membrane respiratory chain NADH dehydrogenase (Complex I) which catalyzes electron transfer from NADH through the respiratory chain, using ubiquinone as an electron acceptor. Essential for the catalytic activity and assembly of complex I. The sequence is that of NADH-ubiquinone oxidoreductase chain 2 from Thoopterus nigrescens (Swift fruit bat).